A 189-amino-acid polypeptide reads, in one-letter code: uncharacterized protein (189 aa).

4 consecutive transmembrane segments (helical) span residues 35 to 55 (IIWY…AVMK), 97 to 117 (GVLQ…ALHF), 123 to 143 (WLLF…YEWT), and 144 to 164 (GNLF…ACQI).

The protein localises to the cell membrane. This is an uncharacterized protein from Bacillus subtilis (strain 168).